The chain runs to 200 residues: Methylamine utilization protein MauD (200 aa).

A helical membrane pass occupies residues 4–24 (FLIASNILLWLAFLGVTVVML). One can recognise a Thioredoxin domain in the interval 49-183 (PDIGDAAPEF…LESLLEADRT (135 aa)).

Its subcellular location is the membrane. It participates in one-carbon metabolism; methylamine degradation. May be specifically involved in the processing, transport, and/or maturation of the MADH beta-subunit. The chain is Methylamine utilization protein MauD (mauD) from Paracoccus denitrificans.